Consider the following 1613-residue polypeptide: Myosin-IIIa (1613 aa).

The region spanning 21-287 (WEIIETIGKG…VSDLLKHKFI (267 aa)) is the Protein kinase domain. ATP-binding positions include 27–35 (IGKGTYGKV) and lysine 50. Aspartate 150 (proton acceptor) is an active-site residue. The 715-residue stretch at 338–1052 (KDVDDLATLD…HVEQLNLMRK (715 aa)) folds into the Myosin motor domain. Positions 933 to 955 (LMDLLSKMVVGQPHFVRCIKPNN) are actin-binding. 2 consecutive IQ domains span residues 1054–1083 (ATNKLVLIQASVRAFLGARRYQELQQKRKS) and 1081–1110 (RKSSAVIIQSAARGHLVRKQRKEIVDMKNT). Disordered regions lie at residues 1136–1168 (VKKQTENAVPTNESNTSTPNNKESPSAGKTAPF) and 1476–1506 (SGVSKGEEPKILRPPRRPRKPKTLNNPEDST). Over residues 1145-1161 (PTNESNTSTPNNKESPS) the composition is skewed to low complexity. The segment at 1398–1476 (EGVHHSKMVD…RHVSTHQYLS (79 aa)) is interaction with MORN4. A compositionally biased stretch (basic residues) spans 1488–1497 (RPPRRPRKPK).

It in the C-terminal section; belongs to the TRAFAC class myosin-kinesin ATPase superfamily. Myosin family. This sequence in the N-terminal section; belongs to the protein kinase superfamily. STE Ser/Thr protein kinase family. As to quaternary structure, interacts with MORN4. Interacts (via C-terminus) with ESPN and ESPNL. As to expression, expressed in the cochlear hair cells (at protein level). Expressed in utricle hair bundles (at protein level).

It localises to the cytoplasm. The protein resides in the cytoskeleton. The protein localises to the cell projection. Its subcellular location is the filopodium tip. It is found in the stereocilium. It carries out the reaction L-seryl-[protein] + ATP = O-phospho-L-seryl-[protein] + ADP + H(+). It catalyses the reaction L-threonyl-[protein] + ATP = O-phospho-L-threonyl-[protein] + ADP + H(+). The catalysed reaction is ATP + H2O = ADP + phosphate + H(+). Functionally, actin-dependent motor protein with a protein kinase activity, playing an essential role in hearing. Probably plays also a role in vision. Required for normal cochlear hair bundle development and hearing. Plays an important role in the early steps of cochlear hair bundle morphogenesis. Influences the number and lengths of stereocilia to be produced and limits the growth of microvilli within the forming auditory hair bundles thereby contributing to the architecture of the hair bundle, including its staircase pattern. Involved in the elongation of actin in stereocilia tips by transporting the actin regulatory factor ESPN to the plus ends of actin filaments. The chain is Myosin-IIIa (Myo3a) from Mus musculus (Mouse).